Here is a 482-residue protein sequence, read N- to C-terminus: Glycogen synthase 2 (482 aa).

Lysine 18 is an ADP-alpha-D-glucose binding site.

Belongs to the glycosyltransferase 1 family. Bacterial/plant glycogen synthase subfamily.

It catalyses the reaction [(1-&gt;4)-alpha-D-glucosyl](n) + ADP-alpha-D-glucose = [(1-&gt;4)-alpha-D-glucosyl](n+1) + ADP + H(+). Its pathway is glycan biosynthesis; glycogen biosynthesis. Functionally, synthesizes alpha-1,4-glucan chains using ADP-glucose. The protein is Glycogen synthase 2 of Bradyrhizobium diazoefficiens (strain JCM 10833 / BCRC 13528 / IAM 13628 / NBRC 14792 / USDA 110).